Consider the following 630-residue polypeptide: Biosynthetic arginine decarboxylase (630 aa).

N6-(pyridoxal phosphate)lysine is present on K99. 281 to 291 (VDIGGGLGVDY) is a binding site for substrate.

Belongs to the Orn/Lys/Arg decarboxylase class-II family. SpeA subfamily. Requires Mg(2+) as cofactor. The cofactor is pyridoxal 5'-phosphate.

It carries out the reaction L-arginine + H(+) = agmatine + CO2. Catalyzes the biosynthesis of agmatine from arginine. This is Biosynthetic arginine decarboxylase from Bacteroides thetaiotaomicron (strain ATCC 29148 / DSM 2079 / JCM 5827 / CCUG 10774 / NCTC 10582 / VPI-5482 / E50).